A 163-amino-acid polypeptide reads, in one-letter code: Nucleotide-binding protein MAP_4063c (163 aa).

The protein belongs to the YajQ family.

Its function is as follows. Nucleotide-binding protein. In Mycolicibacterium paratuberculosis (strain ATCC BAA-968 / K-10) (Mycobacterium paratuberculosis), this protein is Nucleotide-binding protein MAP_4063c.